Here is a 493-residue protein sequence, read N- to C-terminus: 5'-3' exonuclease PLD3 (493 aa).

Over 1–37 (MSSKVEYKPIQPHEEAENHFLQHELHKVKARKYYRCA) the chain is Cytoplasmic. A helical; Signal-anchor for type II membrane protein transmembrane segment spans residues 38 to 58 (LVVAIIITLVFCILASQLLLF). Residues 59-493 (PFLSITSQTT…LSSWKEKCIF (435 aa)) are Lumenal-facing. The N-linked (GlcNAc...) asparagine glycan is linked to asparagine 99. Residues 197–224 (TDGILHTKFWVVDNEHFYIGSANMDWRS) enclose the PLD phosphodiesterase 1 domain. Active-site residues include histidine 202, lysine 204, and aspartate 209. 5 N-linked (GlcNAc...) asparagine glycosylation sites follow: asparagine 237, asparagine 259, asparagine 269, asparagine 285, and asparagine 388. One can recognise a PLD phosphodiesterase 2 domain in the interval 412 to 438 (YARVNHNKYMVTDRVAYIGTSNWSGDY). Residues histidine 417, lysine 419, and aspartate 424 contribute to the active site. 3 N-linked (GlcNAc...) asparagine glycosylation sites follow: asparagine 433, asparagine 450, and asparagine 476.

The protein belongs to the phospholipase D family. N-glycosylated. Post-translationally, proteolytically processed to a soluble form that is stable within endosomes and lysosomes. During transport through the secretory pathway becomes proteolysed by cysteine proteases, thereby releasing a stable soluble lysosomal lumenal polypeptide, whereas the transmembrane-bound fragment is rapidly degraded. Its transport route to lysosomes involves ubiquitination and the ESCRT complex. In terms of processing, ubiquitinated. Ubiquitination mediates sorting into lysosomes.

Its subcellular location is the endoplasmic reticulum membrane. It localises to the lysosome lumen. The protein localises to the early endosome membrane. It is found in the late endosome membrane. The protein resides in the golgi apparatus membrane. Its subcellular location is the endosome membrane. The enzyme catalyses Exonucleolytic cleavage in the 5'- to 3'-direction to yield nucleoside 3'-phosphates.. Its function is as follows. 5'-&gt;3' DNA exonuclease which digests single-stranded DNA (ssDNA). Regulates inflammatory cytokine responses via the degradation of nucleic acids, by reducing the concentration of ssDNA able to stimulate TLR9, a nucleotide-sensing receptor in collaboration with PLD4. May be important in myotube formation. Plays a role in lysosomal homeostasis. Involved in the regulation of endosomal protein sorting. The protein is 5'-3' exonuclease PLD3 (pld3) of Xenopus laevis (African clawed frog).